We begin with the raw amino-acid sequence, 101 residues long: Small ribosomal subunit protein uS14 (101 aa).

Belongs to the universal ribosomal protein uS14 family. As to quaternary structure, part of the 30S ribosomal subunit. Contacts proteins S3 and S10.

Binds 16S rRNA, required for the assembly of 30S particles and may also be responsible for determining the conformation of the 16S rRNA at the A site. This Pseudomonas aeruginosa (strain LESB58) protein is Small ribosomal subunit protein uS14.